Reading from the N-terminus, the 208-residue chain is Small ribosomal subunit protein uS4 (208 aa).

Residues Arg98–Leu161 enclose the S4 RNA-binding domain.

This sequence belongs to the universal ribosomal protein uS4 family. In terms of assembly, part of the 30S ribosomal subunit. Contacts protein S5. The interaction surface between S4 and S5 is involved in control of translational fidelity.

Functionally, one of the primary rRNA binding proteins, it binds directly to 16S rRNA where it nucleates assembly of the body of the 30S subunit. With S5 and S12 plays an important role in translational accuracy. The protein is Small ribosomal subunit protein uS4 of Pelotomaculum thermopropionicum (strain DSM 13744 / JCM 10971 / SI).